Here is a 156-residue protein sequence, read N- to C-terminus: Small ribosomal subunit protein uS7 (156 aa).

Belongs to the universal ribosomal protein uS7 family. Part of the 30S ribosomal subunit. Contacts proteins S9 and S11.

Functionally, one of the primary rRNA binding proteins, it binds directly to 16S rRNA where it nucleates assembly of the head domain of the 30S subunit. Is located at the subunit interface close to the decoding center, probably blocks exit of the E-site tRNA. The sequence is that of Small ribosomal subunit protein uS7 from Methylorubrum extorquens (strain CM4 / NCIMB 13688) (Methylobacterium extorquens).